Reading from the N-terminus, the 319-residue chain is Adenosine receptor A3 (319 aa).

At 1–15 the chain is on the extracellular side; that stretch reads MEADNTTETDWLNIT. N-linked (GlcNAc...) asparagine glycosylation is found at asparagine 5 and asparagine 13. The helical transmembrane segment at 16–38 threads the bilayer; the sequence is YITMEAAIGLCAVVGNMLVIWVV. Residues 39-49 are Cytoplasmic-facing; sequence KLNPTLRTTTV. A helical membrane pass occupies residues 50-73; that stretch reads YFIVSLALADIAVGVLVIPLAIAV. Residues 74 to 85 lie on the Extracellular side of the membrane; that stretch reads SLQVKMHFYACL. Residues cysteine 84 and cysteine 167 are joined by a disulfide bond. Residues 86–107 form a helical membrane-spanning segment; that stretch reads FMSCVLLIFTHASIMSLLAIAV. Residues 108–127 lie on the Cytoplasmic side of the membrane; it reads HRYLRVKLTVRYRTVTTQRR. The helical transmembrane segment at 128 to 149 threads the bilayer; it reads IWLFLGLCWLVSFLVGLTPMFG. Over 150–178 the chain is Extracellular; it reads WNRKATLASSQNSSTLLCHFRSVVSLDYM. Residue asparagine 161 is glycosylated (N-linked (GlcNAc...) asparagine). The chain crosses the membrane as a helical span at residues 179-199; that stretch reads VFFSFITWILVPLVVMCIIYL. The Cytoplasmic portion of the chain corresponds to 200–232; the sequence is DIFYIIRNKLSQNLTGFRETRAFYGREFKTAKS. A helical transmembrane segment spans residues 233–256; sequence LFLVLFLFALCWLPLSIINFVSYF. Topologically, residues 257-262 are extracellular; that stretch reads DVKIPD. Residues 263 to 285 form a helical membrane-spanning segment; that stretch reads VAMCLGILLSHANSMMNPIVYAC. The Cytoplasmic segment spans residues 286-319; sequence KIKKFKETYFLILRAVRLCQTSDSLDSNMEQTTE. Cysteine 304 carries the S-palmitoyl cysteine lipid modification.

The protein belongs to the G-protein coupled receptor 1 family. In terms of processing, phosphorylation on Thr-317 and Thr-318 may be crucial for rapid desensitization. Phosphorylation on Thr-317 may be necessary for phosphorylation on Thr-318 to occur.

It is found in the cell membrane. Functionally, receptor for adenosine. The activity of this receptor is mediated by G proteins which inhibits adenylyl cyclase. This is Adenosine receptor A3 (Adora3) from Mus musculus (Mouse).